A 211-amino-acid polypeptide reads, in one-letter code: Methylthioribulose-1-phosphate dehydratase (211 aa).

Zn(2+) is bound by residues His97 and His99.

Belongs to the aldolase class II family. MtnB subfamily. In terms of assembly, homotetramer. Zn(2+) is required as a cofactor.

It carries out the reaction 5-(methylsulfanyl)-D-ribulose 1-phosphate = 5-methylsulfanyl-2,3-dioxopentyl phosphate + H2O. The protein operates within amino-acid biosynthesis; L-methionine biosynthesis via salvage pathway; L-methionine from S-methyl-5-thio-alpha-D-ribose 1-phosphate: step 2/6. Catalyzes the dehydration of methylthioribulose-1-phosphate (MTRu-1-P) into 2,3-diketo-5-methylthiopentyl-1-phosphate (DK-MTP-1-P). The polypeptide is Methylthioribulose-1-phosphate dehydratase (Geobacillus thermodenitrificans (strain NG80-2)).